The sequence spans 381 residues: MINLRKTHPLMKIINHSFIDLPAPSNISAWWNFGSLLGICLVIQILTGLFLAMHYTSDTLTAFSSVAHICRDVNYGWLIRNLHANGASMFFMCLFLHVGRGIYYGSYLYKETWNIGVMLLLTVTATAFVGYVLPWGQMSFWGATVTTNLFSAIPYIGQTLVEWAWGGFSVDKATLTRFFALHFLLPFVIAGLTLVHLTFLHETGSNNPLGIPSDCDKIPFHPYYSIKDILGLMFLLLVLLSLALFSPDLLGDPDNFSPANPLNTPPHIKPEWYFLFAYAILRSIPNKLGGVLALLASILILLVIPFLHTANQRSMMFRPISQTLFWILTANLITLTWIGGQPVEQPFIIIGQPASILYFPLIHHPMPSAGLFENYMPKPKW.

A run of 4 helical transmembrane segments spans residues 33 to 53, 77 to 98, 113 to 133, and 178 to 198; these read FGSLLGICLVIQILTGLFLAM, WLIRNLHANGASMFFMCLFLHV, WNIGVMLLLTVTATAFVGYVL, and FFALHFLLPFVIAGLTLVHLT. Residues histidine 83 and histidine 97 each contribute to the heme b site. The heme b site is built by histidine 182 and histidine 196. Histidine 201 contacts a ubiquinone. A run of 4 helical transmembrane segments spans residues 226 to 246, 288 to 308, 320 to 340, and 347 to 367; these read IKDILGLMFLLLVLLSLALFS, LGGVLALLASILILLVIPFLH, ISQTLFWILTANLITLTWIGG, and FIIIGQPASILYFPLIHHPMP.

The protein belongs to the cytochrome b family. The cytochrome bc1 complex contains 11 subunits: 3 respiratory subunits (MT-CYB, CYC1 and UQCRFS1), 2 core proteins (UQCRC1 and UQCRC2) and 6 low-molecular weight proteins (UQCRH/QCR6, UQCRB/QCR7, UQCRQ/QCR8, UQCR10/QCR9, UQCR11/QCR10 and a cleavage product of UQCRFS1). This cytochrome bc1 complex then forms a dimer. Requires heme b as cofactor.

The protein resides in the mitochondrion inner membrane. Its function is as follows. Component of the ubiquinol-cytochrome c reductase complex (complex III or cytochrome b-c1 complex) that is part of the mitochondrial respiratory chain. The b-c1 complex mediates electron transfer from ubiquinol to cytochrome c. Contributes to the generation of a proton gradient across the mitochondrial membrane that is then used for ATP synthesis. The sequence is that of Cytochrome b (MT-CYB) from Sminthopsis youngsoni (Lesser hairy-footed dunnart).